A 106-amino-acid polypeptide reads, in one-letter code: ATP-dependent Clp protease adapter protein ClpS (106 aa).

Belongs to the ClpS family. In terms of assembly, binds to the N-terminal domain of the chaperone ClpA.

Involved in the modulation of the specificity of the ClpAP-mediated ATP-dependent protein degradation. This is ATP-dependent Clp protease adapter protein ClpS from Citrobacter koseri (strain ATCC BAA-895 / CDC 4225-83 / SGSC4696).